Consider the following 137-residue polypeptide: ATP synthase epsilon chain (137 aa).

The protein belongs to the ATPase epsilon chain family. In terms of assembly, F-type ATPases have 2 components, CF(1) - the catalytic core - and CF(0) - the membrane proton channel. CF(1) has five subunits: alpha(3), beta(3), gamma(1), delta(1), epsilon(1). CF(0) has three main subunits: a, b and c.

The protein resides in the cell inner membrane. In terms of biological role, produces ATP from ADP in the presence of a proton gradient across the membrane. This Pseudoalteromonas atlantica (strain T6c / ATCC BAA-1087) protein is ATP synthase epsilon chain.